Consider the following 475-residue polypeptide: Membrane-bound lytic murein transglycosylase F (475 aa).

The first 15 residues, M1–A15, serve as a signal peptide directing secretion. The tract at residues A16–V258 is non-LT domain. Positions K259–P475 are LT domain. Residue E303 is part of the active site.

This sequence in the N-terminal section; belongs to the bacterial solute-binding protein 3 family. It in the C-terminal section; belongs to the transglycosylase Slt family.

It localises to the cell outer membrane. It carries out the reaction Exolytic cleavage of the (1-&gt;4)-beta-glycosidic linkage between N-acetylmuramic acid (MurNAc) and N-acetylglucosamine (GlcNAc) residues in peptidoglycan, from either the reducing or the non-reducing ends of the peptidoglycan chains, with concomitant formation of a 1,6-anhydrobond in the MurNAc residue.. Its function is as follows. Murein-degrading enzyme that degrades murein glycan strands and insoluble, high-molecular weight murein sacculi, with the concomitant formation of a 1,6-anhydromuramoyl product. Lytic transglycosylases (LTs) play an integral role in the metabolism of the peptidoglycan (PG) sacculus. Their lytic action creates space within the PG sacculus to allow for its expansion as well as for the insertion of various structures such as secretion systems and flagella. The sequence is that of Membrane-bound lytic murein transglycosylase F from Shewanella halifaxensis (strain HAW-EB4).